The sequence spans 252 residues: METPAYDFDSLTDLPPLPPSDFTPSNAFTFPDHNLDFSFLDSTLSLLNRHHLSESTRLEQIFYDSTHTQLFHNDDTTTTTTPFLHLPDLKSIDAVEEPTTMKLFPSLSPPLPAAKRQKLNSTSSSTTSGSPTASNDGGIITKRRKISDKIRSLEKLMPWERKMNLAMTLEESHKYIKFLQSQIASLRWMPLESVYNTAGEVGETDLLKSLTRQQILQVLANSPGSRNVLSSRGVCVFSYEQLLSLKTMSRNL.

A disordered region spans residues Leu-103–Thr-141. Low complexity predominate over residues Ser-121–Ser-134. One can recognise a bHLH domain in the interval Ser-130 to Leu-179.

Homodimer.

Its subcellular location is the nucleus. In Arabidopsis thaliana (Mouse-ear cress), this protein is Transcription factor bHLH117 (BHLH117).